A 340-amino-acid chain; its full sequence is CMP-N-acetylneuraminate-beta-galactosamide-alpha-2,3-sialyltransferase 1 (340 aa).

The Cytoplasmic portion of the chain corresponds to 1 to 13; it reads MVTLRKRTLKVLT. A helical; Signal-anchor for type II membrane protein membrane pass occupies residues 14 to 34; that stretch reads FLVLFIFLTSFFLNYSHTMVA. At 35-340 the chain is on the lumenal side; that stretch reads TTWFPKQMVL…INKIRIFKGR (306 aa). Disulfide bonds link C59/C64, C61/C139, and C142/C281. The N-linked (GlcNAc...) asparagine glycan is linked to N79. Q105 is a substrate binding site. N-linked (GlcNAc...) asparagine glycosylation occurs at N114. Substrate-binding residues include N147 and N170. N-linked (GlcNAc...) asparagine glycosylation is present at N201. 6 residues coordinate substrate: Y230, Y266, G270, G290, H299, and H316. N323 carries N-linked (GlcNAc...) asparagine glycosylation.

Belongs to the glycosyltransferase 29 family. The soluble form derives from the membrane form by proteolytic processing.

The protein localises to the golgi apparatus. It localises to the golgi stack membrane. It is found in the trans-Golgi network membrane. Its subcellular location is the secreted. The catalysed reaction is a beta-D-galactosyl-(1-&gt;3)-N-acetyl-alpha-D-galactosaminyl derivative + CMP-N-acetyl-beta-neuraminate = an N-acetyl-alpha-neuraminyl-(2-&gt;3)-beta-D-galactosyl-(1-&gt;3)-N-acetyl-alpha-D-galactosaminyl derivative + CMP + H(+). It carries out the reaction a ganglioside GM1 + CMP-N-acetyl-beta-neuraminate = a ganglioside GD1a + CMP + H(+). The enzyme catalyses a ganglioside GM1 (d18:1(4E)) + CMP-N-acetyl-beta-neuraminate = a ganglioside GD1a (d18:1(4E)) + CMP + H(+). It catalyses the reaction ganglioside GM1 (d18:1(4E)/18:0) + CMP-N-acetyl-beta-neuraminate = ganglioside GD1a (18:1(4E)/18:0) + CMP + H(+). The catalysed reaction is a ganglioside GA1 + CMP-N-acetyl-beta-neuraminate = a ganglioside GM1b + CMP + H(+). It carries out the reaction a ganglioside GA1 (d18:1(4E)) + CMP-N-acetyl-beta-neuraminate = a ganglioside GM1b (d18:1(4E)) + CMP + H(+). The enzyme catalyses a ganglioside GD1b + CMP-N-acetyl-beta-neuraminate = a ganglioside GT1b + CMP + H(+). It catalyses the reaction a 3-O-[beta-D-galactosyl-(1-&gt;3)-N-acetyl-alpha-D-galactosaminyl]-L-threonyl-[protein] + CMP-N-acetyl-beta-neuraminate = a 3-O-[N-acetyl-alpha-neuraminyl-(2-&gt;3)-beta-D-galactosyl-(1-&gt;3)-N-acetyl-alpha-D-galactosaminyl]-L-threonyl-[protein] + CMP + H(+). The catalysed reaction is a 3-O-[beta-D-galactosyl-(1-&gt;3)-N-acetyl-alpha-D-galactosaminyl]-L-seryl-[protein] + CMP-N-acetyl-beta-neuraminate = 3-O-[N-acetyl-alpha-neuraminyl-(2-&gt;3)-beta-D-galactosyl-(1-&gt;3)-N-acetyl-alpha-D-galactosaminyl]-L-seryl-[protein] + CMP + H(+). It participates in protein modification; protein glycosylation. It functions in the pathway glycolipid biosynthesis. Functionally, a beta-galactoside alpha2-&gt;3 sialyltransferase involved in terminal sialylation of glycoproteins and glycolipids. Catalyzes the transfer of sialic acid (N-acetyl-neuraminic acid; Neu5Ac) from the nucleotide sugar donor CMP-Neu5Ac onto acceptor Galbeta-(1-&gt;3)-GalNAc-terminated glycoconjugates through an alpha2-3 linkage. Adds sialic acid to the core 1 O-glycan, Galbeta-(1-&gt;3)-GalNAc-O-Ser/Thr, which is a major structure of mucin-type O-glycans. As part of a homeostatic mechanism that regulates CD8-positive T cell numbers, sialylates core 1 O-glycans of T cell glycoproteins, SPN/CD43 and PTPRC/CD45. Prevents premature apoptosis of thymic CD8-positive T cells prior to peripheral emigration, whereas in the secondary lymphoid organs controls the survival of CD8-positive memory T cells generated following a successful immune response. Transfers sialic acid to asialofetuin, presumably onto Galbeta-(1-&gt;3)-GalNAc-O-Ser. Sialylates GM1a, GA1 and GD1b gangliosides to form GD1a, GM1b and GT1b, respectively. In Pan troglodytes (Chimpanzee), this protein is CMP-N-acetylneuraminate-beta-galactosamide-alpha-2,3-sialyltransferase 1 (ST3GAL1).